The following is a 282-amino-acid chain: Autophagy protein 5 (282 aa).

K144 is covalently cross-linked (Glycyl lysine isopeptide (Lys-Gly) (interchain with G-Cter in ATG12)).

Belongs to the ATG5 family. Conjugated with ATG12. Post-translationally, conjugated to ATG12; which is essential for autophagy.

The protein resides in the preautophagosomal structure membrane. Its function is as follows. Involved in cytoplasm to vacuole transport (Cvt) and autophagic vesicle formation. Autophagy is essential for maintenance of amino acid levels and protein synthesis under nitrogen starvation. Required for selective autophagic degradation of the nucleus (nucleophagy). Also required for mitophagy, which eliminates defective or superfluous mitochondria in order to fulfill cellular energy requirements and prevent excess ROS production. Conjugation with ATG12, through a ubiquitin-like conjugating system involving ATG7 as an E1-like activating enzyme and ATG10 as an E2-like conjugating enzyme, is essential for its function. The ATG12-ATG5 conjugate acts as an E3-like enzyme which is required for lipidation of ATG8 and ATG8 association to the vesicle membranes. This Scheffersomyces stipitis (strain ATCC 58785 / CBS 6054 / NBRC 10063 / NRRL Y-11545) (Yeast) protein is Autophagy protein 5 (ATG5).